We begin with the raw amino-acid sequence, 369 residues long: Phenylalanine--tRNA ligase alpha subunit (369 aa).

Glu-272 contacts Mg(2+).

Belongs to the class-II aminoacyl-tRNA synthetase family. Phe-tRNA synthetase alpha subunit type 1 subfamily. In terms of assembly, tetramer of two alpha and two beta subunits. It depends on Mg(2+) as a cofactor.

The protein resides in the cytoplasm. The catalysed reaction is tRNA(Phe) + L-phenylalanine + ATP = L-phenylalanyl-tRNA(Phe) + AMP + diphosphate + H(+). The chain is Phenylalanine--tRNA ligase alpha subunit from Cutibacterium acnes (strain DSM 16379 / KPA171202) (Propionibacterium acnes).